Consider the following 367-residue polypeptide: MASSPVGVPSPQPSRANGNINLGPSANPNARPTDFDFLKVIGKGNYGKVLLAKRKSDGAFYAVKVLQKKSILKNKEQSHIMAERNVLLKNVRHPFLVGLRYSFQTPEKLYFVLDYVNGGELFFHLQREHRFLEPRARFYTAEVASAIGYLHSLNIIYRDLKPENILLDCQGHVVLTDFGLCKECVEPEETTSTFCGTPEYLAPEVLRKEPYDRAVDWWCLGAVLYEMLHGLPPFFNTDVAQMYENILHQPLQIPGGRTVAACDLLQGLLHKDQRQRLGSKEDFLDIKNHMFFSPINWDDLYHKRLTPPFNPNVEGPADLKHFDPEFTQEAVSKSIGCTPDTMSSSSGASSAFLGFSYAQDDDDILDS.

Positions Met-1–Pro-28 are disordered. Ser-10 is modified (phosphoserine). The span at Arg-15–Pro-28 shows a compositional bias: polar residues. Positions Phe-35–Phe-292 constitute a Protein kinase domain. ATP-binding positions include Ile-41–Val-49 and Lys-64. Residues Lys-68 to Gln-77 carry the Nuclear localization signal motif. Asp-159 functions as the Proton acceptor in the catalytic mechanism. Thr-193 carries the post-translational modification Phosphothreonine; by PDPK1. The AGC-kinase C-terminal domain occupies Ser-293–Ser-367. A phosphoserine mark is found at Ser-334 and Ser-356. Position 357 is a phosphotyrosine (Tyr-357).

Belongs to the protein kinase superfamily. AGC Ser/Thr protein kinase family. Post-translationally, activated by phosphorylation on Ser-356 by an unknown kinase (may be mTORC2 but not confirmed), transforming it into a substrate for PDPK1 which then phosphorylates it on Thr-193. Expressed in the proximal tubule and thick ascending limb of the loop of Henle (TALH).

Its subcellular location is the cytoplasm. The protein resides in the nucleus. The catalysed reaction is L-seryl-[protein] + ATP = O-phospho-L-seryl-[protein] + ADP + H(+). It carries out the reaction L-threonyl-[protein] + ATP = O-phospho-L-threonyl-[protein] + ADP + H(+). Two specific sites, one in the kinase domain (Thr-193) and the other in the C-terminal regulatory region (Ser-356), need to be phosphorylated for its full activation. In terms of biological role, serine/threonine-protein kinase which is involved in the regulation of a wide variety of ion channels, membrane transporters, cell growth, survival and proliferation. Up-regulates Na(+) channels: SCNN1A/ENAC, K(+) channels: KCNA3/Kv1.3, KCNE1 and KCNQ1, amino acid transporter: SLC6A19, glutamate transporter: SLC1A6/EAAT4, glutamate receptors: GRIA1/GLUR1 and GRIK2/GLUR6, Na(+)/H(+) exchanger: SLC9A3/NHE3, and the Na(+)/K(+) ATPase. The protein is Serine/threonine-protein kinase Sgk2 (Sgk2) of Rattus norvegicus (Rat).